The sequence spans 274 residues: 2,3,4,5-tetrahydropyridine-2,6-dicarboxylate N-succinyltransferase (274 aa).

Substrate contacts are provided by Arg-106 and Asp-143.

This sequence belongs to the transferase hexapeptide repeat family. Homotrimer.

It is found in the cytoplasm. The enzyme catalyses (S)-2,3,4,5-tetrahydrodipicolinate + succinyl-CoA + H2O = (S)-2-succinylamino-6-oxoheptanedioate + CoA. Its pathway is amino-acid biosynthesis; L-lysine biosynthesis via DAP pathway; LL-2,6-diaminopimelate from (S)-tetrahydrodipicolinate (succinylase route): step 1/3. In Albidiferax ferrireducens (strain ATCC BAA-621 / DSM 15236 / T118) (Rhodoferax ferrireducens), this protein is 2,3,4,5-tetrahydropyridine-2,6-dicarboxylate N-succinyltransferase.